Reading from the N-terminus, the 274-residue chain is NADH-ubiquinone oxidoreductase chain 2 (274 aa).

8 consecutive transmembrane segments (helical) span residues 28–48, 54–74, 79–99, 107–127, 128–148, 171–191, 206–226, and 254–274; these read MIIM…FWFP, LTWM…LMLI, IKYL…IGGL, LMAF…MISE, SIWL…TFMF, FTLF…GFLP, FLLL…LRIC, and LIMT…YFMF.

Belongs to the complex I subunit 2 family.

It localises to the mitochondrion inner membrane. The catalysed reaction is a ubiquinone + NADH + 5 H(+)(in) = a ubiquinol + NAD(+) + 4 H(+)(out). Functionally, core subunit of the mitochondrial membrane respiratory chain NADH dehydrogenase (Complex I) that is believed to belong to the minimal assembly required for catalysis. Complex I functions in the transfer of electrons from NADH to the respiratory chain. The immediate electron acceptor for the enzyme is believed to be ubiquinone. This is NADH-ubiquinone oxidoreductase chain 2 (mt:ND2) from Drosophila mauritiana (Fruit fly).